Reading from the N-terminus, the 513-residue chain is ATP synthase subunit alpha (513 aa).

Position 170 to 177 (Gly-170 to Thr-177) interacts with ATP.

It belongs to the ATPase alpha/beta chains family. In terms of assembly, F-type ATPases have 2 components, CF(1) - the catalytic core - and CF(0) - the membrane proton channel. CF(1) has five subunits: alpha(3), beta(3), gamma(1), delta(1), epsilon(1). CF(0) has four main subunits: a(1), b(1), b'(1) and c(9-12).

Its subcellular location is the cell inner membrane. The enzyme catalyses ATP + H2O + 4 H(+)(in) = ADP + phosphate + 5 H(+)(out). Produces ATP from ADP in the presence of a proton gradient across the membrane. The alpha chain is a regulatory subunit. In Gloeobacter violaceus (strain ATCC 29082 / PCC 7421), this protein is ATP synthase subunit alpha.